Here is a 297-residue protein sequence, read N- to C-terminus: Craniofacial development protein 1 (297 aa).

3 stretches are compositionally biased toward acidic residues: residues Met1 to Tyr18, Tyr25 to Glu43, and Leu70 to Glu79. 2 disordered regions span residues Met1–Glu157 and Phe190–Met222. Phosphoserine is present on residues Ser81, Ser84, and Ser85. The span at Lys97–Glu111 shows a compositional bias: basic and acidic residues. The residue at position 115 (Ser115) is a Phosphoserine. Basic and acidic residues-rich tracts occupy residues Val147–Glu157 and Phe190–Pro199. A Glycyl lysine isopeptide (Lys-Gly) (interchain with G-Cter in SUMO2) cross-link involves residue Lys148. Residues Val176 to Gly215 are hydrophilic. At Ser214 the chain carries Phosphoserine. In terms of domain architecture, BCNT-C spans Leu216–Pro297. Lys217 carries the post-translational modification N6-methyllysine. A Phosphoserine modification is found at Ser248.

In terms of tissue distribution, brain.

Its function is as follows. May play a role during embryogenesis. This chain is Craniofacial development protein 1 (CFDP1), found in Bos taurus (Bovine).